We begin with the raw amino-acid sequence, 622 residues long: Low affinity potassium transport system protein Kup (622 aa).

12 consecutive transmembrane segments (helical) span residues 9 to 29 (LPAI…TSPL), 49 to 69 (VFGF…IKYL), 103 to 123 (VIMG…TPAI), 137 to 157 (PQLD…LFMI), 165 to 185 (VGKL…GLGL), 213 to 233 (VSFI…ALYA), 247 to 267 (WFTV…ALLL), 276 to 296 (PFFL…AALA), 337 to 357 (IYIP…IVSF), 363 to 383 (LAAA…ILST), 396 to 416 (FVAL…TANL), and 419 to 439 (LLSG…VMTT).

This sequence belongs to the HAK/KUP transporter (TC 2.A.72) family.

Its subcellular location is the cell inner membrane. The enzyme catalyses K(+)(in) + H(+)(in) = K(+)(out) + H(+)(out). Responsible for the low-affinity transport of potassium into the cell. Likely operates as a K(+):H(+) symporter. This chain is Low affinity potassium transport system protein Kup, found in Shigella sonnei (strain Ss046).